A 346-amino-acid polypeptide reads, in one-letter code: Cytidine deaminase 5 (346 aa).

2 CMP/dCMP-type deaminase domains span residues 20 to 148 and 183 to 304; these read TDHK…FGSE and DLCS…ITGA. Residue 58 to 60 coordinates substrate; sequence NVE. A Zn(2+)-binding site is contributed by His71. Catalysis depends on Glu73, which acts as the Proton donor. Zn(2+) is bound by residues Cys104 and Cys107.

Belongs to the cytidine and deoxycytidylate deaminase family. As to quaternary structure, homodimer. Requires Zn(2+) as cofactor.

The enzyme catalyses cytidine + H2O + H(+) = uridine + NH4(+). It carries out the reaction 2'-deoxycytidine + H2O + H(+) = 2'-deoxyuridine + NH4(+). Functionally, this enzyme scavenges exogenous and endogenous cytidine and 2'-deoxycytidine for UMP synthesis. This is Cytidine deaminase 5 (CDA5) from Arabidopsis thaliana (Mouse-ear cress).